Here is a 419-residue protein sequence, read N- to C-terminus: Histone acetyltransferase type B subunit 2 (419 aa).

WD repeat units follow at residues 131–171 (PHDG…VEAL), 177–217 (YHTE…KNIK), 225–265 (AHTD…IIHN), 267–307 (NTKK…NPLY), and 311–351 (GHED…AEQT). The interaction with the histone H4 N-terminus stretch occupies residues 353 to 357 (DEIED). A WD 6 repeat occupies 368 to 408 (GHKTSINDIAVNPNINWLVASAEEDNIVQIWKCSSNIPRIG).

It belongs to the WD repeat RBAP46/RBAP48/MSI1 family. In terms of assembly, component of the HAT-B complex composed of at least HAT1 and HAT2. The HAT-B complex binds to histone H4 tail.

It is found in the cytoplasm. Its subcellular location is the nucleus. In terms of biological role, regulatory subunit of the histone acetylase B (HAT-B) complex. The complex acetylates Lys-12 of histone H4 which is required for telomeric silencing. The protein is Histone acetyltransferase type B subunit 2 (HAT2) of Candida glabrata (strain ATCC 2001 / BCRC 20586 / JCM 3761 / NBRC 0622 / NRRL Y-65 / CBS 138) (Yeast).